Here is an 817-residue protein sequence, read N- to C-terminus: LPS-assembly protein LptD (817 aa).

The signal sequence occupies residues 1 to 45 (MDRLPLPHALHVPTHRPFAAPLPPRRLLARLAALMLCGVPLAVLA).

Belongs to the LptD family. As to quaternary structure, component of the lipopolysaccharide transport and assembly complex. Interacts with LptE and LptA.

It is found in the cell outer membrane. In terms of biological role, together with LptE, is involved in the assembly of lipopolysaccharide (LPS) at the surface of the outer membrane. This Acidovorax sp. (strain JS42) protein is LPS-assembly protein LptD.